Reading from the N-terminus, the 156-residue chain is Small ribosomal subunit protein uS7 (156 aa).

Belongs to the universal ribosomal protein uS7 family. In terms of assembly, part of the 30S ribosomal subunit. Contacts proteins S9 and S11.

Its function is as follows. One of the primary rRNA binding proteins, it binds directly to 16S rRNA where it nucleates assembly of the head domain of the 30S subunit. Is located at the subunit interface close to the decoding center, probably blocks exit of the E-site tRNA. The protein is Small ribosomal subunit protein uS7 of Bacillus pumilus (strain SAFR-032).